The chain runs to 664 residues: Kinesin-like protein KIF2B (664 aa).

Phosphothreonine; by PLK1 is present on Thr125. Positions 149-177 (CLREIEKLQKQREKRRRLQLEIRARRALD) form a coiled coil. The residue at position 204 (Ser204) is a Phosphoserine; by PLK1. Residues 213–543 (RICVCVRKRP…LRYANRVKEL (331 aa)) form the Kinesin motor domain. 303 to 310 (GQTGSGKT) provides a ligand contact to ATP. Residues 583–607 (VQKEEEKESDELTSTKEPAASWSRS) form a disordered region. Residues 642–663 (VLTEIQKKLQLLRDDLQKKSQA) adopt a coiled-coil conformation.

This sequence belongs to the TRAFAC class myosin-kinesin ATPase superfamily. Kinesin family. MCAK/KIF2 subfamily. Phosphorylation at Thr-125 by PLK1 is required for activity in the correction of kinetochore-microtubules attachment errors, while phosphorylation at Ser-204 also by PLK1 is required for the kinetochore localization and activity in prometaphase.

The protein localises to the cytoplasm. Its subcellular location is the cytoskeleton. It localises to the microtubule organizing center. It is found in the centrosome. The protein resides in the spindle. The protein localises to the chromosome. Its subcellular location is the centromere. It localises to the kinetochore. In terms of biological role, plus end-directed microtubule-dependent motor required for spindle assembly and chromosome movement. Has microtubule depolymerization activity. Plays a role in chromosome congression. The protein is Kinesin-like protein KIF2B of Rattus norvegicus (Rat).